The sequence spans 163 residues: Peptide methionine sulfoxide reductase MsrA 1 (163 aa).

The active site involves Cys21.

This sequence belongs to the MsrA Met sulfoxide reductase family.

The enzyme catalyses L-methionyl-[protein] + [thioredoxin]-disulfide + H2O = L-methionyl-(S)-S-oxide-[protein] + [thioredoxin]-dithiol. The catalysed reaction is [thioredoxin]-disulfide + L-methionine + H2O = L-methionine (S)-S-oxide + [thioredoxin]-dithiol. Has an important function as a repair enzyme for proteins that have been inactivated by oxidation. Catalyzes the reversible oxidation-reduction of methionine sulfoxide in proteins to methionine. This Nostoc sp. (strain PCC 7120 / SAG 25.82 / UTEX 2576) protein is Peptide methionine sulfoxide reductase MsrA 1 (msrA1).